Here is a 270-residue protein sequence, read N- to C-terminus: uncharacterized protein (270 aa).

30–55 (ATGSLGRVAARALADAGARLTLAGGN) contributes to the NADP(+) binding site. Serine 157 serves as a coordination point for substrate. Residue tyrosine 171 is the Proton acceptor of the active site.

The protein belongs to the short-chain dehydrogenases/reductases (SDR) family.

This is an uncharacterized protein from Mycobacterium tuberculosis (strain CDC 1551 / Oshkosh).